Consider the following 427-residue polypeptide: Glutamate-1-semialdehyde 2,1-aminomutase (427 aa).

The residue at position 267 (lysine 267) is an N6-(pyridoxal phosphate)lysine.

Belongs to the class-III pyridoxal-phosphate-dependent aminotransferase family. HemL subfamily. As to quaternary structure, homodimer. Pyridoxal 5'-phosphate is required as a cofactor.

It is found in the cytoplasm. The enzyme catalyses (S)-4-amino-5-oxopentanoate = 5-aminolevulinate. The protein operates within porphyrin-containing compound metabolism; protoporphyrin-IX biosynthesis; 5-aminolevulinate from L-glutamyl-tRNA(Glu): step 2/2. The protein is Glutamate-1-semialdehyde 2,1-aminomutase of Citrifermentans bemidjiense (strain ATCC BAA-1014 / DSM 16622 / JCM 12645 / Bem) (Geobacter bemidjiensis).